The following is a 136-amino-acid chain: Evasin P991 (136 aa).

The signal sequence occupies residues 1–28 (MHSTIVYACLLALAVFVALHGTPLAALA). N-linked (GlcNAc...) asparagine glycosylation is found at asparagine 41, asparagine 61, asparagine 64, asparagine 78, asparagine 92, asparagine 100, and asparagine 122. Disulfide bonds link cysteine 55/cysteine 77, cysteine 73/cysteine 114, cysteine 90/cysteine 119, and cysteine 109/cysteine 128.

It localises to the secreted. Its function is as follows. Salivary chemokine-binding protein which has chemokine-neutralizing activity and binds to host chemokines CCL2, CCL3, CCL3L1, CCL4, CCL4L1, CCL5, CCL6, CCL7, CCL8, CCL9, CCL11, CCL12, CCL13, CCL14, CCL16, CCL17, CCL18, CCL19, CCL22, CCL23, CCL24 and CCL27. This chain is Evasin P991, found in Amblyomma cajennense (Cayenne tick).